We begin with the raw amino-acid sequence, 162 residues long: NADH-quinone oxidoreductase subunit I (162 aa).

4Fe-4S ferredoxin-type domains are found at residues 53-83 (QRRY…IESE) and 93-122 (SRYD…ETHI). [4Fe-4S] cluster-binding residues include C63, C66, C69, C73, C102, C105, C108, and C112.

Belongs to the complex I 23 kDa subunit family. NDH-1 is composed of 14 different subunits. Subunits NuoA, H, J, K, L, M, N constitute the membrane sector of the complex. Requires [4Fe-4S] cluster as cofactor.

The protein localises to the cell inner membrane. The catalysed reaction is a quinone + NADH + 5 H(+)(in) = a quinol + NAD(+) + 4 H(+)(out). Functionally, NDH-1 shuttles electrons from NADH, via FMN and iron-sulfur (Fe-S) centers, to quinones in the respiratory chain. The immediate electron acceptor for the enzyme in this species is believed to be ubiquinone. Couples the redox reaction to proton translocation (for every two electrons transferred, four hydrogen ions are translocated across the cytoplasmic membrane), and thus conserves the redox energy in a proton gradient. This Chromobacterium violaceum (strain ATCC 12472 / DSM 30191 / JCM 1249 / CCUG 213 / NBRC 12614 / NCIMB 9131 / NCTC 9757 / MK) protein is NADH-quinone oxidoreductase subunit I.